We begin with the raw amino-acid sequence, 208 residues long: Kinetochore protein Spc25 (208 aa).

Residues 31-101 (SKIAAKHQLI…KKQRRDELMG (71 aa)) adopt a coiled-coil conformation.

This sequence belongs to the SPC25 family. As to quaternary structure, component of the Ndc80 complex, which is composed of Ndc80, Nuf2 and Spc25.

It localises to the nucleus. The protein localises to the chromosome. Its subcellular location is the centromere. It is found in the kinetochore. Its function is as follows. Acts as a component of the essential kinetochore-associated Ndc80 complex, which is required for chromosome segregation and spindle checkpoint activity during meiosis and mitosis. Required for kinetochore integrity and the organization of stable microtubule binding sites in the outer plate of the kinetochore. Participates in SAC signaling that responds specifically to disruptions in spindle microtubule dynamics. The NDC80 complex synergistically enhances the affinity of the SKA1 complex for microtubules and may allow the NDC80 complex to track depolymerizing microtubules. In Drosophila mojavensis (Fruit fly), this protein is Kinetochore protein Spc25.